We begin with the raw amino-acid sequence, 134 residues long: Small ribosomal subunit protein uS11 (134 aa).

It belongs to the universal ribosomal protein uS11 family. As to quaternary structure, part of the 30S ribosomal subunit. Interacts with proteins S7 and S18. Binds to IF-3.

Functionally, located on the platform of the 30S subunit, it bridges several disparate RNA helices of the 16S rRNA. Forms part of the Shine-Dalgarno cleft in the 70S ribosome. The protein is Small ribosomal subunit protein uS11 of Frankia casuarinae (strain DSM 45818 / CECT 9043 / HFP020203 / CcI3).